A 595-amino-acid polypeptide reads, in one-letter code: Solute carrier family 13 member 1 (595 aa).

Helical transmembrane passes span 13-33 (FLLV…IRSK), 40-60 (ILFV…ITAL), 77-97 (VASA…CLAT), 113-133 (VMMV…STAF), and 134-154 (LSMW…VEAV). A glycan (N-linked (GlcNAc...) asparagine) is linked at Asn174. The tract at residues 190–218 (QETNERKEKTKPALGSSNDKGKVSSKMET) is disordered. Positions 208–218 (DKGKVSSKMET) are enriched in basic and acidic residues. 8 consecutive transmembrane segments (helical) span residues 239 to 259 (LMCL…ITGT), 283 to 303 (SWFL…WIWL), 348 to 368 (IVTL…DPGF), 381 to 401 (GYVT…LIPA), 464 to 484 (PLGS…VTSL), 491 to 511 (PATI…IHVN), 512 to 532 (PLHI…LPVA), and 553 to 573 (AGLG…FTWI). An N-linked (GlcNAc...) asparagine glycan is attached at Asn591.

It belongs to the SLC13A/DASS transporter (TC 2.A.47) family. NADC subfamily. In terms of tissue distribution, kidney and intestine.

The protein resides in the apical cell membrane. It catalyses the reaction sulfate(out) + 3 Na(+)(out) = sulfate(in) + 3 Na(+)(in). The enzyme catalyses selenate(out) + 3 Na(+)(out) = selenate(in) + 3 Na(+)(in). It carries out the reaction thiosulfate(out) + 3 Na(+)(out) = thiosulfate(in) + 3 Na(+)(in). In terms of biological role, sodium:sulfate symporter that mediates sulfate reabsorption in the kidney and small intestine. Can also mediate the transport of selenate and thiosulfate. The protein is Solute carrier family 13 member 1 (Slc13a1) of Rattus norvegicus (Rat).